A 224-amino-acid chain; its full sequence is Urease accessory protein UreF (224 aa).

This sequence belongs to the UreF family. UreD, UreF and UreG form a complex that acts as a GTP-hydrolysis-dependent molecular chaperone, activating the urease apoprotein by helping to assemble the nickel containing metallocenter of UreC. The UreE protein probably delivers the nickel.

It localises to the cytoplasm. In terms of biological role, required for maturation of urease via the functional incorporation of the urease nickel metallocenter. The sequence is that of Urease accessory protein UreF from Pseudomonas putida (strain ATCC 700007 / DSM 6899 / JCM 31910 / BCRC 17059 / LMG 24140 / F1).